The chain runs to 163 residues: Shikimate kinase (163 aa).

10-15 is a binding site for ATP; the sequence is GVGKSS. S14 lines the Mg(2+) pocket. D28, R52, and G75 together coordinate substrate. R116 provides a ligand contact to ATP. R134 contributes to the substrate binding site. Residue R151 coordinates ATP.

Belongs to the shikimate kinase family. In terms of assembly, monomer. Requires Mg(2+) as cofactor.

Its subcellular location is the cytoplasm. The enzyme catalyses shikimate + ATP = 3-phosphoshikimate + ADP + H(+). It functions in the pathway metabolic intermediate biosynthesis; chorismate biosynthesis; chorismate from D-erythrose 4-phosphate and phosphoenolpyruvate: step 5/7. In terms of biological role, catalyzes the specific phosphorylation of the 3-hydroxyl group of shikimic acid using ATP as a cosubstrate. The protein is Shikimate kinase of Streptococcus thermophilus (strain ATCC BAA-491 / LMD-9).